The sequence spans 230 residues: MIQRRETFLNNVAEKLGRGRRTAGVKRPDYTVKPQFEVMKEHSSDQLVNVLSEQCTKIHTDVKQTKVDRLEQAIDNVLEEYSARNVITWNDPRFDQFGLTSFLQREQVEVWDHTEGERLVEKAEQADIGITFADYTLAESGTVVLLSGNGKGRSVSLLPTYYIAIIPKSTLVPRMSQVTRELHLKAASGERLPSCINFISGPSNSADIEMNLVVGVHGPIRACYIVVEDR.

It belongs to the LutC/YkgG family.

Its function is as follows. Is involved in L-lactate degradation and allows cells to grow with lactate as the sole carbon source. The polypeptide is Lactate utilization protein C (Halalkalibacterium halodurans (strain ATCC BAA-125 / DSM 18197 / FERM 7344 / JCM 9153 / C-125) (Bacillus halodurans)).